We begin with the raw amino-acid sequence, 493 residues long: Inosine-5'-monophosphate dehydrogenase (493 aa).

CBS domains follow at residues 97-155 (VIID…NAPI) and 159-219 (MTSE…AKDE). Residues aspartate 253 and 303–305 (GIG) contribute to the NAD(+) site. The K(+) site is built by glycine 305 and glycine 307. Serine 308 contacts IMP. Cysteine 310 contributes to the K(+) binding site. Residue cysteine 310 is the Thioimidate intermediate of the active site. Residues 343-345 (DGG), 366-367 (GS), and 390-394 (YRGMG) contribute to the IMP site. Arginine 406 (proton acceptor) is an active-site residue. Glutamate 421 contacts IMP. Glutamate 475, serine 476, and histidine 477 together coordinate K(+).

The protein belongs to the IMPDH/GMPR family. In terms of assembly, homotetramer. K(+) is required as a cofactor.

The enzyme catalyses IMP + NAD(+) + H2O = XMP + NADH + H(+). It functions in the pathway purine metabolism; XMP biosynthesis via de novo pathway; XMP from IMP: step 1/1. Its activity is regulated as follows. Mycophenolic acid (MPA) is a non-competitive inhibitor that prevents formation of the closed enzyme conformation by binding to the same site as the amobile flap. In contrast, mizoribine monophosphate (MZP) is a competitive inhibitor that induces the closed conformation. MPA is a potent inhibitor of mammalian IMPDHs but a poor inhibitor of the bacterial enzymes. MZP is a more potent inhibitor of bacterial IMPDH. Functionally, catalyzes the conversion of inosine 5'-phosphate (IMP) to xanthosine 5'-phosphate (XMP), the first committed and rate-limiting step in the de novo synthesis of guanine nucleotides, and therefore plays an important role in the regulation of cell growth. The protein is Inosine-5'-monophosphate dehydrogenase of Streptococcus pyogenes serotype M3 (strain ATCC BAA-595 / MGAS315).